The following is a 138-amino-acid chain: Ribosome-binding factor A (138 aa).

This sequence belongs to the RbfA family. As to quaternary structure, monomer. Binds 30S ribosomal subunits, but not 50S ribosomal subunits or 70S ribosomes.

Its subcellular location is the cytoplasm. Functionally, one of several proteins that assist in the late maturation steps of the functional core of the 30S ribosomal subunit. Associates with free 30S ribosomal subunits (but not with 30S subunits that are part of 70S ribosomes or polysomes). Required for efficient processing of 16S rRNA. May interact with the 5'-terminal helix region of 16S rRNA. In Bradyrhizobium sp. (strain BTAi1 / ATCC BAA-1182), this protein is Ribosome-binding factor A.